The primary structure comprises 356 residues: Phosphate acyltransferase (356 aa).

This sequence belongs to the PlsX family. Homodimer. Probably interacts with PlsY.

It localises to the cytoplasm. It carries out the reaction a fatty acyl-[ACP] + phosphate = an acyl phosphate + holo-[ACP]. It participates in lipid metabolism; phospholipid metabolism. Its function is as follows. Catalyzes the reversible formation of acyl-phosphate (acyl-PO(4)) from acyl-[acyl-carrier-protein] (acyl-ACP). This enzyme utilizes acyl-ACP as fatty acyl donor, but not acyl-CoA. The polypeptide is Phosphate acyltransferase (Stutzerimonas stutzeri (strain A1501) (Pseudomonas stutzeri)).